A 728-amino-acid chain; its full sequence is 1,4-alpha-glucan branching enzyme GlgB (728 aa).

Asp405 serves as the catalytic Nucleophile. Glu458 (proton donor) is an active-site residue.

Belongs to the glycosyl hydrolase 13 family. GlgB subfamily. Monomer.

It catalyses the reaction Transfers a segment of a (1-&gt;4)-alpha-D-glucan chain to a primary hydroxy group in a similar glucan chain.. It participates in glycan biosynthesis; glycogen biosynthesis. Its function is as follows. Catalyzes the formation of the alpha-1,6-glucosidic linkages in glycogen by scission of a 1,4-alpha-linked oligosaccharide from growing alpha-1,4-glucan chains and the subsequent attachment of the oligosaccharide to the alpha-1,6 position. The sequence is that of 1,4-alpha-glucan branching enzyme GlgB from Salmonella paratyphi A (strain ATCC 9150 / SARB42).